Consider the following 213-residue polypeptide: NADH dehydrogenase [ubiquinone] iron-sulfur protein 7, mitochondrial (213 aa).

The N-terminal 38 residues, 1–38, are a transit peptide targeting the mitochondrion; sequence MAALSAPGLCGFRILGLRSSVGTAVQARGVHQSVATDG. The disordered stretch occupies residues 32 to 53; that stretch reads QSVATDGPSSTQPALPKARAVA. The span at 33–44 shows a compositional bias: polar residues; it reads SVATDGPSSTQP. [4Fe-4S] cluster is bound by residues Cys88 and Cys89. Hydroxyarginine is present on Arg111. [4Fe-4S] cluster contacts are provided by Cys153 and Cys183.

Belongs to the complex I 20 kDa subunit family. As to quaternary structure, core subunit of respiratory chain NADH dehydrogenase (Complex I) which is composed of 45 different subunits. This is a component of the iron-sulfur (IP) fragment of the enzyme. [4Fe-4S] cluster serves as cofactor. Hydroxylated ar Arg-111 by NDUFAF5 early in the pathway of assembly of complex I, before the formation of the juncture between peripheral and membrane arms.

The protein localises to the mitochondrion inner membrane. It carries out the reaction a ubiquinone + NADH + 5 H(+)(in) = a ubiquinol + NAD(+) + 4 H(+)(out). Its function is as follows. Core subunit of the mitochondrial membrane respiratory chain NADH dehydrogenase (Complex I) which catalyzes electron transfer from NADH through the respiratory chain, using ubiquinone as an electron acceptor. Essential for the catalytic activity of complex I. The protein is NADH dehydrogenase [ubiquinone] iron-sulfur protein 7, mitochondrial (NDUFS7) of Gorilla gorilla gorilla (Western lowland gorilla).